A 416-amino-acid chain; its full sequence is 4-hydroxy-3-methylbut-2-en-1-yl diphosphate synthase (flavodoxin) (416 aa).

[4Fe-4S] cluster is bound by residues C304, C307, C350, and E357.

Belongs to the IspG family. The cofactor is [4Fe-4S] cluster.

It carries out the reaction (2E)-4-hydroxy-3-methylbut-2-enyl diphosphate + oxidized [flavodoxin] + H2O + 2 H(+) = 2-C-methyl-D-erythritol 2,4-cyclic diphosphate + reduced [flavodoxin]. It functions in the pathway isoprenoid biosynthesis; isopentenyl diphosphate biosynthesis via DXP pathway; isopentenyl diphosphate from 1-deoxy-D-xylulose 5-phosphate: step 5/6. In terms of biological role, converts 2C-methyl-D-erythritol 2,4-cyclodiphosphate (ME-2,4cPP) into 1-hydroxy-2-methyl-2-(E)-butenyl 4-diphosphate. This is 4-hydroxy-3-methylbut-2-en-1-yl diphosphate synthase (flavodoxin) from Agrobacterium fabrum (strain C58 / ATCC 33970) (Agrobacterium tumefaciens (strain C58)).